We begin with the raw amino-acid sequence, 386 residues long: Acyl-[acyl-carrier-protein] dehydrogenase MbtN (386 aa).

This sequence belongs to the acyl-CoA dehydrogenase family. Requires FAD as cofactor.

It functions in the pathway siderophore biosynthesis; mycobactin biosynthesis. In terms of biological role, catalyzes the dehydrogenation at the alpha-beta position of ACP-bound acyl chains. This results in the introduction of a double bond in the lipidic chain, which is further transferred to the epsilon-amino group of lysine residue in the mycobactin core by MbtK. The polypeptide is Acyl-[acyl-carrier-protein] dehydrogenase MbtN (mbtN) (Mycobacterium bovis (strain ATCC BAA-935 / AF2122/97)).